The primary structure comprises 356 residues: tRNA N6-adenosine threonylcarbamoyltransferase (356 aa).

Fe cation-binding residues include His-115 and His-119. Substrate-binding positions include 138 to 142, Asp-171, Gly-184, and Asn-283; that span reads LVSGG. Position 311 (Asp-311) interacts with Fe cation.

The protein belongs to the KAE1 / TsaD family. It depends on Fe(2+) as a cofactor.

The protein resides in the cytoplasm. It carries out the reaction L-threonylcarbamoyladenylate + adenosine(37) in tRNA = N(6)-L-threonylcarbamoyladenosine(37) in tRNA + AMP + H(+). Its function is as follows. Required for the formation of a threonylcarbamoyl group on adenosine at position 37 (t(6)A37) in tRNAs that read codons beginning with adenine. Is involved in the transfer of the threonylcarbamoyl moiety of threonylcarbamoyl-AMP (TC-AMP) to the N6 group of A37, together with TsaE and TsaB. TsaD likely plays a direct catalytic role in this reaction. The chain is tRNA N6-adenosine threonylcarbamoyltransferase from Prochlorococcus marinus (strain MIT 9303).